Consider the following 51-residue polypeptide: Ribosome biogenesis protein Nop10 (51 aa).

It belongs to the NOP10 family.

Involved in ribosome biogenesis; more specifically in 18S rRNA pseudouridylation and in cleavage of pre-rRNA. The sequence is that of Ribosome biogenesis protein Nop10 from Methanococcus maripaludis (strain C6 / ATCC BAA-1332).